The primary structure comprises 147 residues: Acidic phospholipase A2 S3-24 (147 aa).

The N-terminal stretch at 1-19 (MYPAHLLVLLAVCVSLLGA) is a signal peptide. Residues 20–27 (SDMPPQPL) constitute a propeptide that is removed on maturation. 7 cysteine pairs are disulfide-bonded: Cys-38-Cys-99, Cys-54-Cys-146, Cys-56-Cys-72, Cys-71-Cys-127, Cys-78-Cys-120, Cys-88-Cys-113, and Cys-106-Cys-118. Tyr-55, Gly-57, and Gly-59 together coordinate Ca(2+). Residue His-75 is part of the active site. A Ca(2+)-binding site is contributed by Asp-76. Residue Asp-121 is part of the active site.

It belongs to the phospholipase A2 family. Group I subfamily. D49 sub-subfamily. Requires Ca(2+) as cofactor. As to expression, expressed by the venom gland.

The protein resides in the secreted. The enzyme catalyses a 1,2-diacyl-sn-glycero-3-phosphocholine + H2O = a 1-acyl-sn-glycero-3-phosphocholine + a fatty acid + H(+). Its function is as follows. Snake venom phospholipase A2 (PLA2) that inhibits collagen-induced platelet aggregation. PLA2 catalyzes the calcium-dependent hydrolysis of the 2-acyl groups in 3-sn-phosphoglycerides. The chain is Acidic phospholipase A2 S3-24 from Austrelaps superbus (Lowland copperhead snake).